A 412-amino-acid chain; its full sequence is MGFITKAIPIVLAALSTVNGAKILEAGPHAETIPNKYIVVMKREVSDEAFSAHTTWLSQNLNRRVMRRSGSSKAMAGMQDKYSLGGIFRAYSGEFDDAMIKDISSHDDVDYIEPDFVVRTSTNGTNLTRQDNVPSWGLARVSSKKAGGTTYYYDSSAGKGVTAYVIDTGIDINHEDFRGRAKWGKNFVDDMDEDCNGHGTHVAGTVGGTKYGLAKGVSLVAVKVLDCEGSGSNSGVIKGMEWAMREASGGGNGTAKAAGKAVMNMSLGGTRSQASNQAAKAISDAGIFMAVAAGNENMDAQHSSPASEPSVCTVAASTEDDGKADFSNYGQLVDVYAPGKDITSLKPGGSTDTLSGTSMASPHVCGLGAYLIGLGKQGGPGLCDTIKEMAHDAIQRPGEGTTSKLIYNGSGK.

The N-terminal stretch at 1-20 (MGFITKAIPIVLAALSTVNG) is a signal peptide. The propeptide occupies 21-127 (AKILEAGPHA…VRTSTNGTNL (107 aa)). One can recognise an Inhibitor I9 domain in the interval 36-120 (KYIVVMKREV…YIEPDFVVRT (85 aa)). N-linked (GlcNAc...) asparagine glycans are attached at residues N123 and N126. In terms of domain architecture, Peptidase S8 spans 135–412 (SWGLARVSSK…SKLIYNGSGK (278 aa)). Catalysis depends on charge relay system residues D167 and H198. Residues N252 and N264 are each glycosylated (N-linked (GlcNAc...) asparagine). The Charge relay system role is filled by S358. N408 carries N-linked (GlcNAc...) asparagine glycosylation.

It belongs to the peptidase S8 family.

It localises to the secreted. Functionally, secreted subtilisin-like serine protease with keratinolytic activity that contributes to pathogenicity. This Trichophyton tonsurans (Scalp ringworm fungus) protein is Subtilisin-like protease 6 (SUB6).